A 382-amino-acid polypeptide reads, in one-letter code: D-galactonate dehydratase (382 aa).

Position 183 (Asp-183) interacts with Mg(2+). His-185 functions as the Proton donor in the catalytic mechanism. Glu-209 and Glu-235 together coordinate Mg(2+). His-285 (proton acceptor) is an active-site residue. The segment at 361–382 (NENPPDWRNPVWRHSDGSIAEW) is disordered.

This sequence belongs to the mandelate racemase/muconate lactonizing enzyme family. GalD subfamily. Mg(2+) serves as cofactor.

It catalyses the reaction D-galactonate = 2-dehydro-3-deoxy-D-galactonate + H2O. Its pathway is carbohydrate acid metabolism; D-galactonate degradation; D-glyceraldehyde 3-phosphate and pyruvate from D-galactonate: step 1/3. Its function is as follows. Catalyzes the dehydration of D-galactonate to 2-keto-3-deoxy-D-galactonate. The polypeptide is D-galactonate dehydratase (Xanthomonas axonopodis pv. citri (strain 306)).